The following is a 304-amino-acid chain: Aspartate carbamoyltransferase catalytic subunit (304 aa).

Carbamoyl phosphate-binding residues include R56 and T57. K85 provides a ligand contact to L-aspartate. The carbamoyl phosphate site is built by R106, H134, and Q137. R167 and R226 together coordinate L-aspartate. The carbamoyl phosphate site is built by L265 and P266.

The protein belongs to the aspartate/ornithine carbamoyltransferase superfamily. ATCase family. As to quaternary structure, heterooligomer of catalytic and regulatory chains.

The enzyme catalyses carbamoyl phosphate + L-aspartate = N-carbamoyl-L-aspartate + phosphate + H(+). The protein operates within pyrimidine metabolism; UMP biosynthesis via de novo pathway; (S)-dihydroorotate from bicarbonate: step 2/3. Catalyzes the condensation of carbamoyl phosphate and aspartate to form carbamoyl aspartate and inorganic phosphate, the committed step in the de novo pyrimidine nucleotide biosynthesis pathway. This is Aspartate carbamoyltransferase catalytic subunit from Picrophilus torridus (strain ATCC 700027 / DSM 9790 / JCM 10055 / NBRC 100828 / KAW 2/3).